The chain runs to 355 residues: Plasmodial-specific protein LAV1-2 (355 aa).

EF-hand domains are found at residues 151–186 and 217–252; these read EDTNILRQLFLSSAVSGSGKFSFQDLKQVLAKYADT and NDLAALVADFRKIDTNSNGTLSRKEFREHFVRLGFD. Ca(2+) is bound by residues Asp230, Asn232, Asn234, Thr236, Glu241, Asp265, Asp267, Ser269, Asp271, Glu276, Asp295, Asp297, Ser299, Gln301, Glu306, Asp332, Asp334, Ser336, Ser338, and Glu343. 2 EF-hand domains span residues 282 to 317 and 319 to 354; these read LCLLVLRILYAFADFDKSGQLSKEEVQKVLEDAHIP and SARKKFEHQFSVVDVDDSKSLSYQEFVMLVLLMFHD.

The polypeptide is Plasmodial-specific protein LAV1-2 (Physarum polycephalum (Slime mold)).